The primary structure comprises 251 residues: uncharacterized protein (251 aa).

A signal peptide spans 1–25 (MSAGRLNKKSLGIVMLLSVGLLLAG). Cys26 carries N-palmitoyl cysteine lipidation. Cys26 carries the S-diacylglycerol cysteine lipid modification. Residues 40 to 84 (SVYTVKRGDTLYRISRTTGTSVKELARLNGISPPYTIEVGQKLKL) form the LysM domain. The span at 93–112 (TRKSTAKSTTKTASVTPSSA) shows a compositional bias: low complexity. Residues 93–115 (TRKSTAKSTTKTASVTPSSAVPK) form a disordered region.

Belongs to the peptidase M23B family.

The protein resides in the cell inner membrane. This is an uncharacterized protein from Escherichia coli (strain K12).